Consider the following 414-residue polypeptide: WW domain-containing oxidoreductase (414 aa).

Residues 1-24 form a disordered region; it reads MAALRYAGLDDTDSEDELPPGWEE. Residue threonine 12 is modified to Phosphothreonine. Position 14 is a phosphoserine (serine 14). The 34-residue stretch at 16 to 49 folds into the WW 1 domain; sequence DELPPGWEERTTKDGWVYYANHTEEKTQWEHPKT. Tyrosine 33 carries the phosphotyrosine modification. The Nuclear localization signal signature appears at 50 to 55; the sequence is GKRKRV. The WW 2 domain maps to 57-90; that stretch reads GDLPYGWEQGTDENGQVFFVDHINKRTTYLDPRL. The interaction with MAPT stretch occupies residues 125–414; it reads KVVVVTGANS…IQERLGSQSG (290 aa). 131-137 serves as a coordination point for NADP(+); that stretch reads GANSGIG. Positions 209 to 273 are mediates targeting to the mitochondria; it reads CNAATFALPW…RFTDINDSLG (65 aa). Substrate is bound at residue serine 260. Tyrosine 287 carries the phosphotyrosine; by TNK2 modification. Residue tyrosine 293 is the Proton acceptor of the active site.

It belongs to the short-chain dehydrogenases/reductases (SDR) family. Interacts with TP53, p73/TP73 and MAPK8. Interacts with MAPT/TAU, RUNX2 and HYAL2. Forms a ternary complex with TP53 and MDM2. Interacts with ERBB4, LITAF and WBP1. Interacts with DVL1, DVL2 and DVL3. May interact with FAM189B and SCOTIN. Interacts with TNK2. Interacts with TMEM207. Interacts (via WW domain) with VOPP1. Post-translationally, phosphorylated upon genotoxic stress. Phosphorylation of Tyr-33 regulates interaction with TP53, TP73 and MAPK8. May also regulate proapoptotic activity. Phosphorylation by TNK2 is associated with polyubiquitination and degradation. Ubiquitinated when phosphorylated by TNK2, leading to its degradation.

It is found in the cytoplasm. The protein resides in the nucleus. Its subcellular location is the mitochondrion. The protein localises to the golgi apparatus. It localises to the lysosome. Putative oxidoreductase. Acts as a tumor suppressor and plays a role in apoptosis. May function synergistically with p53/TP53 to control genotoxic stress-induced cell death. Plays a role in TGFB1 signaling and TGFB1-mediated cell death. May also play a role in tumor necrosis factor (TNF)-mediated cell death. Required for normal bone development. Inhibits Wnt signaling, probably by sequestering DVL2 in the cytoplasm. The polypeptide is WW domain-containing oxidoreductase (WWOX) (Pongo abelii (Sumatran orangutan)).